The primary structure comprises 879 residues: JmjC domain-containing histone demethylation protein 1 (879 aa).

3 disordered regions span residues 1–45, 117–212, and 407–449; these read MSEQ…EEGK, STSP…PKRK, and KDVK…EGLK. The segment at 23 to 116 adopts a PHD-type zinc-finger fold; the sequence is PEPCPLCRET…KWYCAPCLAR (94 aa). Composition is skewed to basic and acidic residues over residues 183–192 and 407–433; these read IDMKSEREQQ and KDVKEKGRGNDSRESSEIRKEGSHLTE. The region spanning 416-598 is the JmjC domain; it reads NDSRESSEIR…TQLRLRQIEI (183 aa). Position 472 (threonine 472) interacts with substrate. Fe cation contacts are provided by histidine 475 and aspartate 477. Lysine 492 contributes to the substrate binding site. Histidine 566 serves as a coordination point for Fe cation. The disordered stretch occupies residues 763–879; the sequence is HPPAWSENRQ…KVEEDMDIDH (117 aa). Over residues 769 to 782 the composition is skewed to polar residues; that stretch reads ENRQSPQIETTTVQ. A compositionally biased stretch (low complexity) spans 786–818; it reads PSTSSSDAISGSGPGASPGASANGGANENEQAE. Over residues 848–864 the composition is skewed to basic and acidic residues; it reads FVEKKTVWGPKLDKEKI.

It belongs to the JHDM1 histone demethylase family. Fe(2+) is required as a cofactor.

The protein localises to the nucleus. The catalysed reaction is N(6),N(6)-dimethyl-L-lysyl(36)-[histone H3] + 2 2-oxoglutarate + 2 O2 = L-lysyl(36)-[histone H3] + 2 formaldehyde + 2 succinate + 2 CO2. In terms of biological role, histone demethylase that specifically demethylates 'Lys-36' of histone H3, thereby playing a central role in histone code. This chain is JmjC domain-containing histone demethylation protein 1 (JHD1), found in Cryptococcus neoformans var. neoformans serotype D (strain B-3501A) (Filobasidiella neoformans).